A 140-amino-acid chain; its full sequence is Vacuolar protein sorting-associated protein 55 homolog (140 aa).

The Cytoplasmic segment spans residues 1-16 (MADVPGYLRTCLDMGK). Residues 17 to 37 (IAFLAILVSTGIVLQILACAL) traverse the membrane as a helical segment. At 38 to 40 (FNN) the chain is on the lumenal side. Residues 41 to 61 (WWPMLSVIMYVLLPMPLLFFG) form a helical membrane-spanning segment. The Cytoplasmic segment spans residues 62–75 (GSDSTSLFNESDNS). Residues 76-98 (WINAAKFLTGASAVGSVAIPSIL) form a helical membrane-spanning segment. At 99-108 (KHAGLIGWGA) the chain is on the lumenal side. Residues 109–129 (LALDLSSYVVFLVAILGYICI) traverse the membrane as a helical segment. Topologically, residues 130–140 (GDASDNYYSYI) are cytoplasmic.

The protein belongs to the OB-RGRP/VPS55 family.

It localises to the endosome membrane. Functionally, involved in endosomal protein transport. The polypeptide is Vacuolar protein sorting-associated protein 55 homolog (Arabidopsis thaliana (Mouse-ear cress)).